Here is a 338-residue protein sequence, read N- to C-terminus: Beta-ketoacyl-[acyl-carrier-protein] synthase III 2 (338 aa).

Residues Cys119 and His255 contribute to the active site. Residues 256–260 form an ACP-binding region; it reads QANIR. The active site involves Asn285.

Belongs to the thiolase-like superfamily. FabH family. In terms of assembly, homodimer.

The protein resides in the cytoplasm. The catalysed reaction is malonyl-[ACP] + acetyl-CoA + H(+) = 3-oxobutanoyl-[ACP] + CO2 + CoA. The protein operates within lipid metabolism; fatty acid biosynthesis. In terms of biological role, catalyzes the condensation reaction of fatty acid synthesis by the addition to an acyl acceptor of two carbons from malonyl-ACP. Catalyzes the first condensation reaction which initiates fatty acid synthesis and may therefore play a role in governing the total rate of fatty acid production. Possesses both acetoacetyl-ACP synthase and acetyl transacylase activities. Its substrate specificity determines the biosynthesis of branched-chain and/or straight-chain of fatty acids. In Deinococcus radiodurans (strain ATCC 13939 / DSM 20539 / JCM 16871 / CCUG 27074 / LMG 4051 / NBRC 15346 / NCIMB 9279 / VKM B-1422 / R1), this protein is Beta-ketoacyl-[acyl-carrier-protein] synthase III 2.